Consider the following 916-residue polypeptide: Protein translocase subunit SecA (916 aa).

ATP contacts are provided by residues Gln87, 105-109 (GEGKT), and Asp507. 4 residues coordinate Zn(2+): Cys900, Cys902, Cys911, and His912.

This sequence belongs to the SecA family. As to quaternary structure, monomer and homodimer. Part of the essential Sec protein translocation apparatus which comprises SecA, SecYEG and auxiliary proteins SecDF-YajC and YidC. It depends on Zn(2+) as a cofactor.

Its subcellular location is the cell inner membrane. The protein localises to the cytoplasm. The catalysed reaction is ATP + H2O + cellular proteinSide 1 = ADP + phosphate + cellular proteinSide 2.. In terms of biological role, part of the Sec protein translocase complex. Interacts with the SecYEG preprotein conducting channel. Has a central role in coupling the hydrolysis of ATP to the transfer of proteins into and across the cell membrane, serving both as a receptor for the preprotein-SecB complex and as an ATP-driven molecular motor driving the stepwise translocation of polypeptide chains across the membrane. The protein is Protein translocase subunit SecA of Neisseria meningitidis serogroup B (strain ATCC BAA-335 / MC58).